A 241-amino-acid polypeptide reads, in one-letter code: Large ribosomal subunit protein uL3 (241 aa).

A disordered region spans residues 140–168 (SHRSIGSTGGRQDPGKTFKNKKMPGHMGD). Residue Q151 is modified to N5-methylglutamine.

The protein belongs to the universal ribosomal protein uL3 family. Part of the 50S ribosomal subunit. Forms a cluster with proteins L14 and L19. Post-translationally, methylated by PrmB.

One of the primary rRNA binding proteins, it binds directly near the 3'-end of the 23S rRNA, where it nucleates assembly of the 50S subunit. This chain is Large ribosomal subunit protein uL3, found in Azorhizobium caulinodans (strain ATCC 43989 / DSM 5975 / JCM 20966 / LMG 6465 / NBRC 14845 / NCIMB 13405 / ORS 571).